The primary structure comprises 186 residues: Elongation factor P (186 aa).

Belongs to the elongation factor P family.

Its subcellular location is the cytoplasm. It participates in protein biosynthesis; polypeptide chain elongation. Functionally, involved in peptide bond synthesis. Stimulates efficient translation and peptide-bond synthesis on native or reconstituted 70S ribosomes in vitro. Probably functions indirectly by altering the affinity of the ribosome for aminoacyl-tRNA, thus increasing their reactivity as acceptors for peptidyl transferase. The sequence is that of Elongation factor P from Prochlorococcus marinus subsp. pastoris (strain CCMP1986 / NIES-2087 / MED4).